We begin with the raw amino-acid sequence, 377 residues long: 4-hydroxy-3-methylbut-2-en-1-yl diphosphate synthase (flavodoxin) (377 aa).

[4Fe-4S] cluster contacts are provided by cysteine 275, cysteine 278, cysteine 310, and glutamate 317.

Belongs to the IspG family. It depends on [4Fe-4S] cluster as a cofactor.

It carries out the reaction (2E)-4-hydroxy-3-methylbut-2-enyl diphosphate + oxidized [flavodoxin] + H2O + 2 H(+) = 2-C-methyl-D-erythritol 2,4-cyclic diphosphate + reduced [flavodoxin]. The protein operates within isoprenoid biosynthesis; isopentenyl diphosphate biosynthesis via DXP pathway; isopentenyl diphosphate from 1-deoxy-D-xylulose 5-phosphate: step 5/6. Functionally, converts 2C-methyl-D-erythritol 2,4-cyclodiphosphate (ME-2,4cPP) into 1-hydroxy-2-methyl-2-(E)-butenyl 4-diphosphate. This Jannaschia sp. (strain CCS1) protein is 4-hydroxy-3-methylbut-2-en-1-yl diphosphate synthase (flavodoxin).